We begin with the raw amino-acid sequence, 478 residues long: MSTGKVVKITQAVVDLKFEDGLPKIFNALKSKLKYKGKELVLEVSQHIGDNIVRCIAMDSTDGMSRGDEFVDTGAPISVPVGRSTLGRIFNVVGELIDECGPLKGKYDLEPIHRSPPSFTEQKIQEEVLVTGIKVIDLLAPYLKGGKIGLFGGAGVGKTVLIMELINNIAKAHKGFSVFAGVGERTREGNDLYNEMITSNVIDINEHEKSQAVLVYGQMNEPPGARARVALTALTMAEYFRDHENQDVLFFVDNIFRFTQAGSEISALLGRIPSAVGYQPTLATDMGAMQERIASTTAGSITSVQAIYVPADDLTDPAPATTFSHLDATTVLSRQIAEMGIYPAVDPLDSTSQSLSAEIIGEEHYNVASEVKRILQTYKSLQDIIAILGMDELSDEDKIIVDRARKIQKFLSQPFHVAEVFTGMSGKFVSLSDTISSFKGIIEGKYDHLPEAAFYMVGSISEAIEKAESIKAEVGAGH.

152–159 serves as a coordination point for ATP; that stretch reads GGAGVGKT.

Belongs to the ATPase alpha/beta chains family. In terms of assembly, F-type ATPases have 2 components, CF(1) - the catalytic core - and CF(0) - the membrane proton channel. CF(1) has five subunits: alpha(3), beta(3), gamma(1), delta(1), epsilon(1). CF(0) has three main subunits: a(1), b(2) and c(9-12). The alpha and beta chains form an alternating ring which encloses part of the gamma chain. CF(1) is attached to CF(0) by a central stalk formed by the gamma and epsilon chains, while a peripheral stalk is formed by the delta and b chains.

Its subcellular location is the cell membrane. It catalyses the reaction ATP + H2O + 4 H(+)(in) = ADP + phosphate + 5 H(+)(out). Functionally, produces ATP from ADP in the presence of a proton gradient across the membrane. The catalytic sites are hosted primarily by the beta subunits. The protein is ATP synthase subunit beta of Wolbachia pipientis subsp. Culex pipiens (strain wPip).